Consider the following 878-residue polypeptide: Serine/threonine-protein kinase N3 (878 aa).

REM-1 domains lie at Glu-2–Leu-77, Ser-86–Pro-165, and Pro-169–Pro-238. Residue Ser-164 is modified to Phosphoserine. The tract at residues Pro-461–Asp-525 is disordered. The 260-residue stretch at Phe-548 to Phe-807 folds into the Protein kinase domain. Residues Leu-554–Val-562 and Lys-577 contribute to the ATP site. Asp-673 acts as the Proton acceptor in catalysis. 3 positions are modified to phosphothreonine: Thr-707, Thr-711, and Thr-849. In terms of domain architecture, AGC-kinase C-terminal spans Arg-808 to Ser-878.

The protein belongs to the protein kinase superfamily. AGC Ser/Thr protein kinase family. PKC subfamily. Post-translationally, autophosphorylated.

The protein localises to the nucleus. The protein resides in the cytoplasm. It is found in the perinuclear region. It catalyses the reaction L-seryl-[protein] + ATP = O-phospho-L-seryl-[protein] + ADP + H(+). It carries out the reaction L-threonyl-[protein] + ATP = O-phospho-L-threonyl-[protein] + ADP + H(+). Two specific sites, Thr-707 (activation loop of the kinase domain) and Thr-849 (turn motif), need to be phosphorylated for its full activation. In terms of biological role, contributes to invasiveness in malignant prostate cancer. The polypeptide is Serine/threonine-protein kinase N3 (Pkn3) (Mus musculus (Mouse)).